The following is a 59-amino-acid chain: Large ribosomal subunit protein uL30 (59 aa).

Belongs to the universal ribosomal protein uL30 family. Part of the 50S ribosomal subunit.

The protein is Large ribosomal subunit protein uL30 of Geobacter metallireducens (strain ATCC 53774 / DSM 7210 / GS-15).